The sequence spans 227 residues: MAHAAQVGLQDATSPIMEELVIFHDHALMIIFLICFLVLYALFLTLTTKLTNTSISDAQEMETIWTILPAIILILIALPSLRILYLTDEINDPSFTIKSIGHQWYWTYEYTDYGGLIFNSYMLPPLFLEPGDLRLLDVDNRVVLPVEAPVRMMITSQDVLHSWTVPSLGLKTDAIPGRLNQTTFTATRPGVYYGQCSEICGANHSFMPIVLELIPLKIFEMGPVFTL.

Topologically, residues 1–14 are mitochondrial intermembrane; the sequence is MAHAAQVGLQDATS. Residues 15–45 form a helical membrane-spanning segment; it reads PIMEELVIFHDHALMIIFLICFLVLYALFLT. Residues 46–59 lie on the Mitochondrial matrix side of the membrane; it reads LTTKLTNTSISDAQ. Residues 60–87 traverse the membrane as a helical segment; it reads EMETIWTILPAIILILIALPSLRILYLT. Residues 88–227 are Mitochondrial intermembrane-facing; that stretch reads DEINDPSFTI…IFEMGPVFTL (140 aa). Residues H161, C196, E198, C200, H204, and M207 each contribute to the Cu cation site. Position 198 (E198) interacts with Mg(2+).

The protein belongs to the cytochrome c oxidase subunit 2 family. In terms of assembly, component of the cytochrome c oxidase (complex IV, CIV), a multisubunit enzyme composed of 14 subunits. The complex is composed of a catalytic core of 3 subunits MT-CO1, MT-CO2 and MT-CO3, encoded in the mitochondrial DNA, and 11 supernumerary subunits COX4I, COX5A, COX5B, COX6A, COX6B, COX6C, COX7A, COX7B, COX7C, COX8 and NDUFA4, which are encoded in the nuclear genome. The complex exists as a monomer or a dimer and forms supercomplexes (SCs) in the inner mitochondrial membrane with NADH-ubiquinone oxidoreductase (complex I, CI) and ubiquinol-cytochrome c oxidoreductase (cytochrome b-c1 complex, complex III, CIII), resulting in different assemblies (supercomplex SCI(1)III(2)IV(1) and megacomplex MCI(2)III(2)IV(2)). Found in a complex with TMEM177, COA6, COX18, COX20, SCO1 and SCO2. Interacts with TMEM177 in a COX20-dependent manner. Interacts with COX20. Interacts with COX16. Cu cation is required as a cofactor.

It is found in the mitochondrion inner membrane. The catalysed reaction is 4 Fe(II)-[cytochrome c] + O2 + 8 H(+)(in) = 4 Fe(III)-[cytochrome c] + 2 H2O + 4 H(+)(out). In terms of biological role, component of the cytochrome c oxidase, the last enzyme in the mitochondrial electron transport chain which drives oxidative phosphorylation. The respiratory chain contains 3 multisubunit complexes succinate dehydrogenase (complex II, CII), ubiquinol-cytochrome c oxidoreductase (cytochrome b-c1 complex, complex III, CIII) and cytochrome c oxidase (complex IV, CIV), that cooperate to transfer electrons derived from NADH and succinate to molecular oxygen, creating an electrochemical gradient over the inner membrane that drives transmembrane transport and the ATP synthase. Cytochrome c oxidase is the component of the respiratory chain that catalyzes the reduction of oxygen to water. Electrons originating from reduced cytochrome c in the intermembrane space (IMS) are transferred via the dinuclear copper A center (CU(A)) of subunit 2 and heme A of subunit 1 to the active site in subunit 1, a binuclear center (BNC) formed by heme A3 and copper B (CU(B)). The BNC reduces molecular oxygen to 2 water molecules using 4 electrons from cytochrome c in the IMS and 4 protons from the mitochondrial matrix. This is Cytochrome c oxidase subunit 2 (MT-CO2) from Pongo abelii (Sumatran orangutan).